We begin with the raw amino-acid sequence, 737 residues long: Glycogen [starch] synthase, muscle (737 aa).

Phosphoserine; by AMPK and PKA is present on S8. S11 is modified (phosphoserine). A UDP-binding site is contributed by K39. Positions 205 and 211 each coordinate UDP-alpha-D-glucose. 5 residues coordinate alpha-D-glucose 6-phosphate: H291, E292, Q294, H297, and K301. Residue R331 coordinates UDP. R331 provides a ligand contact to UDP-alpha-D-glucose. S412 carries the post-translational modification Phosphoserine. H501 lines the alpha-D-glucose 6-phosphate pocket. The UDP-alpha-D-glucose site is built by E510, W512, and G513. T515 contributes to the UDP binding site. R582 and R586 together coordinate alpha-D-glucose 6-phosphate. A disordered region spans residues 634-737 (YRYPRPASVP…PTSSLGEERN (104 aa)). Residues S641, S645, S649, and S652 each carry the phosphoserine modification. A Phosphoserine; by GSK3-alpha and GSK3-beta modification is found at S653. S657 bears the Phosphoserine; by CK2 mark. The segment covering 658 to 681 (EDEEDPRNGPLEEDGERYDEDEEA) has biased composition (acidic residues). Over residues 682 to 695 (AKDRRNIRAPEWPR) the composition is skewed to basic and acidic residues. Residue S698 is modified to Phosphoserine. Over residues 698-714 (SCTSSTSGSKRNSVDTA) the composition is skewed to polar residues. Phosphothreonine is present on T700. At S710 the chain carries Phosphoserine. Positions 715 to 737 (TSSSLSTPSEPLSPTSSLGEERN) are enriched in low complexity. Position 721 is a phosphothreonine (T721). S727 and S731 each carry phosphoserine.

It belongs to the glycosyltransferase 3 family. In terms of assembly, part of the GYS1-GYG1 complex, a heterooctamer composed of a tetramer of GYS1 and 2 dimers of GYG1, where each GYS1 protomer binds to one GYG1 subunit (via GYG1 C-terminus); the GYS1 tetramer may dissociate from GYG1 dimers to continue glycogen polymerization on its own. In terms of processing, phosphorylation at Ser-8 by AMPK inactivates the enzyme activity. Primed phosphorylation at Ser-657 (site 5) by CSNK2A1 and CSNK2A2 is required for inhibitory phosphorylation at Ser-641 (site 3a), Ser-645 (site 3b), Ser-649 (site 3c) and Ser-653 (site 4) by GSK3A an GSK3B. Phosphorylated at Ser-641 by DYRK2, leading to inactivation. Phosphorylated at Ser-641 by PASK, leading to inactivation; phosphorylation by PASK is inhibited by glycogen. Dephosphorylation at Ser-641 and Ser-645 by PP1 activates the enzyme. As to expression, expressed in skeletal muscle and most other cell types where glycogen is present.

It carries out the reaction [(1-&gt;4)-alpha-D-glucosyl](n) + UDP-alpha-D-glucose = [(1-&gt;4)-alpha-D-glucosyl](n+1) + UDP + H(+). Its pathway is glycan biosynthesis; glycogen biosynthesis. Its activity is regulated as follows. Allosteric activation by glucose-6-phosphate. Phosphorylation reduces enzyme activity by constraining a tense conformation of the tetramer through inter-subunit interaction. Phosphorylation reduces the activity towards UDP-glucose. When in the non-phosphorylated state, glycogen synthase does not require glucose-6-phosphate as an allosteric activator; when phosphorylated it does. Functionally, glycogen synthase participates in the glycogen biosynthetic process along with glycogenin and glycogen branching enzyme. Extends the primer composed of a few glucose units formed by glycogenin by adding new glucose units to it. In this context, glycogen synthase transfers the glycosyl residue from UDP-Glc to the non-reducing end of alpha-1,4-glucan. The protein is Glycogen [starch] synthase, muscle of Homo sapiens (Human).